Reading from the N-terminus, the 378-residue chain is Long-chain-fatty-acid--luciferin-component ligase (378 aa).

This sequence belongs to the LuxE family.

The catalysed reaction is a long-chain fatty acid + L-cysteinyl-[protein] + ATP = an S-(long-chain fatty acyl)-L-cysteinyl-[protein] + AMP + diphosphate. The protein operates within lipid metabolism; fatty acid reduction for biolumincescence. Acyl-protein synthetase activates tetradecanoic acid. It is a component of the fatty acid reductase complex responsible for converting tetradecanoic acid to the aldehyde which serves as substrate in the luciferase-catalyzed reaction. The protein is Long-chain-fatty-acid--luciferin-component ligase of Aliivibrio fischeri (Vibrio fischeri).